Here is a 25-residue protein sequence, read N- to C-terminus: Chrysophsin-1 (25 aa).

H25 is subject to Histidine amide.

As to expression, gill. Localized in certain epithelial cells lining the surface of secondary lamellae and eosinophilic granule cell-like cells at the base of secondary lamellae.

It is found in the secreted. Functionally, has antibacterial activity against Gram-positive bacteria B.subtilis ATCC 6633, L.garvieae ATCC 49156 and S.iniae F-8502, and Gram-negative bacteria E.coli WT-2, V.anguillarum ATCC 19264, V.penaeicida KHA, V.harveyi ATCC 14126, V.vulnificus ATCC 33148, A.salmonicida NCMB 1102 and P.putida ATCC 12633. Has hemolytic activity against human red blood cells. Seems to disrupt the membranes by adopting an alpha helical conformation. May play a significant role in innate host defense. This Pagrus major (Red sea bream) protein is Chrysophsin-1.